Reading from the N-terminus, the 321-residue chain is Cytochrome f (321 aa).

The signal sequence occupies residues 1–38; that stretch reads MKKNFYTISKTMSRSLKLILFSVFIGFSIFLIPQPTWA. 4 residues coordinate heme: Tyr39, Cys59, Cys62, and His63. The chain crosses the membrane as a helical span at residues 288-308; it reads VIGMIIFFIGVGLSQIMLVLK.

The protein belongs to the cytochrome f family. The 4 large subunits of the cytochrome b6-f complex are cytochrome b6, subunit IV (17 kDa polypeptide, PetD), cytochrome f and the Rieske protein, while the 4 small subunits are PetG, PetL, PetM and PetN. The complex functions as a dimer. Heme is required as a cofactor.

Its subcellular location is the cellular thylakoid membrane. In terms of biological role, component of the cytochrome b6-f complex, which mediates electron transfer between photosystem II (PSII) and photosystem I (PSI), cyclic electron flow around PSI, and state transitions. The sequence is that of Cytochrome f from Prochlorococcus marinus (strain NATL2A).